The sequence spans 227 residues: Exodeoxyribonuclease (227 aa).

It carries out the reaction Exonucleolytic cleavage in the 3'- to 5'-direction to yield nucleoside 5'-phosphates.. Its function is as follows. 3'-5' exonuclease that preferentially uses ssDNA as substrate. Plays a role in group I intron homing. May play a role in the final step of host DNA degradation, by scavenging DNA into mononucleotides. In Escherichia coli (Bacteriophage T4), this protein is Exodeoxyribonuclease (dexA).